Here is a 508-residue protein sequence, read N- to C-terminus: Pancreatic alpha-amylase (508 aa).

An N-terminal signal peptide occupies residues 1–15 (MKFVLLLSLIGFCWA). Q16 is modified (pyrrolidone carboxylic acid). 3 disulfides stabilise this stretch: C43–C101, C85–C130, and C156–C172. The Ca(2+) site is built by N115, R170, and D179. R207 is a chloride binding site. Catalysis depends on D209, which acts as the Nucleophile. H213 provides a ligand contact to Ca(2+). The active-site Proton donor is the E245. Residues N310 and R349 each contribute to the chloride site. 2 cysteine pairs are disulfide-bonded: C390-C396 and C462-C474.

The protein belongs to the glycosyl hydrolase 13 family. Monomer. The cofactor is Ca(2+). Chloride serves as cofactor.

It localises to the secreted. The protein localises to the extracellular space. It catalyses the reaction Endohydrolysis of (1-&gt;4)-alpha-D-glucosidic linkages in polysaccharides containing three or more (1-&gt;4)-alpha-linked D-glucose units.. The protein is Pancreatic alpha-amylase (Amy2) of Rattus norvegicus (Rat).